The following is a 984-amino-acid chain: MYCBP-associated protein (984 aa).

Disordered stretches follow at residues 61–88 (LEASENVKEKKRAKGPEQPTPTIQEEPE) and 218–240 (GESKQKAPKEEKRPPWAPPPQHN). The segment covering 218 to 231 (GESKQKAPKEEKRP) has biased composition (basic and acidic residues). Threonine 613 carries the phosphothreonine modification. The residue at position 619 (serine 619) is a Phosphoserine. Disordered stretches follow at residues 693–729 (SPISETQVPRPENEALRESGSQKARVGTKSPQRKSIM) and 842–917 (PEEQ…ASQD). The segment covering 862–910 (AGKEERKGAAQEKKQLGIKDKEDKKGAKLLGKEDRPNSKKHKAKDDKKV) has biased composition (basic and acidic residues).

In terms of assembly, interacts with MYCBP. In terms of tissue distribution, expressed specifically in testis.

It localises to the cytoplasm. It is found in the membrane. May play a role in spermatogenesis. May be involved in synaptic processes. This Homo sapiens (Human) protein is MYCBP-associated protein.